We begin with the raw amino-acid sequence, 127 residues long: Large ribosomal subunit protein bL19 (127 aa).

This sequence belongs to the bacterial ribosomal protein bL19 family.

Its function is as follows. This protein is located at the 30S-50S ribosomal subunit interface and may play a role in the structure and function of the aminoacyl-tRNA binding site. The chain is Large ribosomal subunit protein bL19 from Synechococcus sp. (strain JA-3-3Ab) (Cyanobacteria bacterium Yellowstone A-Prime).